We begin with the raw amino-acid sequence, 680 residues long: Potassium-transporting ATPase ATP-binding subunit (680 aa).

Helical transmembrane passes span 37-57 (VIFVTEAMAALVTLFFVLDVA), 69-89 (IAAWLWFTVLFATFAEAVAEG), 223-243 (ILLSGLTLIFLIAVVTLWGLA), and 257-277 (ALLVTLIPTTIGGLLSAIGIA). Residue aspartate 307 is the 4-aspartylphosphate intermediate of the active site. Residues aspartate 344, glutamate 348, 375–382 (FTAETRLS), and lysine 393 contribute to the ATP site. Aspartate 516 and aspartate 520 together coordinate Mg(2+). Transmembrane regions (helical) follow at residues 586–606 (FAIIPALFVTTYPALGVLNIM), 614–634 (AILSAVIFNALIIVALIPLAL), and 652–672 (LLVYGLGGLVLPFAGIKLIDL).

Belongs to the cation transport ATPase (P-type) (TC 3.A.3) family. Type IA subfamily. The system is composed of three essential subunits: KdpA, KdpB and KdpC.

The protein localises to the cell inner membrane. The enzyme catalyses K(+)(out) + ATP + H2O = K(+)(in) + ADP + phosphate + H(+). In terms of biological role, part of the high-affinity ATP-driven potassium transport (or Kdp) system, which catalyzes the hydrolysis of ATP coupled with the electrogenic transport of potassium into the cytoplasm. This subunit is responsible for energy coupling to the transport system and for the release of the potassium ions to the cytoplasm. The sequence is that of Potassium-transporting ATPase ATP-binding subunit from Rhizobium meliloti (strain 1021) (Ensifer meliloti).